Consider the following 500-residue polypeptide: NAD(P)H-quinone oxidoreductase chain 4, chloroplastic (500 aa).

15 helical membrane passes run 4–24 (LPWL…IPLF), 31–51 (IIRW…TYTF), 87–107 (IGPI…AWPV), 111–131 (PRLF…LFAS), 134–154 (ILLF…LISM), 167–187 (FILY…SMGL), 207–227 (VVLE…KLPI), 242–262 (HYST…YGLI), 274–294 (SLFS…AALT), 305–325 (IAYS…SMAD), 330–350 (GAIL…FLAG), 358–378 (TLFL…STMF), 386–406 (LALP…GIIT), 416–436 (IVIA…LLSM), and 462–482 (IFIS…PDLV).

The protein belongs to the complex I subunit 4 family.

The protein resides in the plastid. It localises to the chloroplast thylakoid membrane. The enzyme catalyses a plastoquinone + NADH + (n+1) H(+)(in) = a plastoquinol + NAD(+) + n H(+)(out). The catalysed reaction is a plastoquinone + NADPH + (n+1) H(+)(in) = a plastoquinol + NADP(+) + n H(+)(out). This Cycas taitungensis (Prince sago) protein is NAD(P)H-quinone oxidoreductase chain 4, chloroplastic.